The following is a 92-amino-acid chain: Large ribosomal subunit protein bL25 (92 aa).

Belongs to the bacterial ribosomal protein bL25 family. As to quaternary structure, part of the 50S ribosomal subunit; part of the 5S rRNA/L5/L18/L25 subcomplex. Contacts the 5S rRNA. Binds to the 5S rRNA independently of L5 and L18.

This is one of the proteins that binds to the 5S RNA in the ribosome where it forms part of the central protuberance. This Aliivibrio salmonicida (strain LFI1238) (Vibrio salmonicida (strain LFI1238)) protein is Large ribosomal subunit protein bL25.